A 490-amino-acid polypeptide reads, in one-letter code: GTPase Der (490 aa).

EngA-type G domains lie at 3–166 (PVVA…AEAM) and 200–373 (IKLA…DSAT). Residues 9–16 (GRPNVGKS), 56–60 (DTGGI), 118–121 (NKVD), 206–213 (GKPNVGKS), 253–257 (DTAGV), and 318–321 (NKWD) contribute to the GTP site. The KH-like domain occupies 374–458 (RRVSTSMLTR…PIQIRFQDGG (85 aa)).

Belongs to the TRAFAC class TrmE-Era-EngA-EngB-Septin-like GTPase superfamily. EngA (Der) GTPase family. As to quaternary structure, associates with the 50S ribosomal subunit.

Its function is as follows. GTPase that plays an essential role in the late steps of ribosome biogenesis. This is GTPase Der from Shewanella piezotolerans (strain WP3 / JCM 13877).